Reading from the N-terminus, the 235-residue chain is RNA pyrophosphohydrolase (235 aa).

Positions 6 to 149 (GFRPNVGIIL…KRGVYEMALT (144 aa)) constitute a Nudix hydrolase domain. Residues 38–59 (GGIDRGENPEQAMFRELHEEVG) carry the Nudix box motif. A disordered region spans residues 184–235 (ANQSGEPGSFPAAGGIPSYATRPGAPFELPPGATFEPDPQTSFGVNAPTKKT).

It belongs to the Nudix hydrolase family. RppH subfamily. The cofactor is a divalent metal cation.

Its function is as follows. Accelerates the degradation of transcripts by removing pyrophosphate from the 5'-end of triphosphorylated RNA, leading to a more labile monophosphorylated state that can stimulate subsequent ribonuclease cleavage. The protein is RNA pyrophosphohydrolase of Polaromonas naphthalenivorans (strain CJ2).